Here is a 486-residue protein sequence, read N- to C-terminus: MVATPSTSAPAKGVVRQVIGPVLDVEFPAGKLPKILNALRIEAKNPAGQDIALTAEVQQLLGDHRVRAVAMSGTDGLVRGMEATDTGAPISVPVGEATLGRIFNVLGEPVDEQGPVNTSDIAPIHRSAPKLTDLETKPKVFETGIKVIDLLAPYRQGGKVGLFGGAGVGKTVLIQELINNIAKEHGGVSVFGGVGERTREGNDLYEEFKESGVINADDLSQSKVALCFGQMNEPPGARMRVGLSALTMAEHFRDVNKQDVLLFVDNIFRFVQAGSEVSALLGRMPSAVGYQPTLGTDVGALQERITSTLEGSITSIQAVYVPADDLTDPAPATTFAHLDATTVLARGLAAKGIYPAVDPLDSTSTMLQPSVVGDEHYKTARAVQSTLQRYKELQDIIAILGLDELSEEDRLTVSRARKIEKFLSQPFFVAEIFTGMSGKYVKLEDTIAGFNMILAGELDDLPEQAFYLVGNIDEVKAKAEKIKEEK.

Residue 164–171 (GGAGVGKT) participates in ATP binding.

Belongs to the ATPase alpha/beta chains family. In terms of assembly, F-type ATPases have 2 components, CF(1) - the catalytic core - and CF(0) - the membrane proton channel. CF(1) has five subunits: alpha(3), beta(3), gamma(1), delta(1), epsilon(1). CF(0) has four main subunits: a(1), b(1), b'(1) and c(9-12).

The protein localises to the cellular thylakoid membrane. The enzyme catalyses ATP + H2O + 4 H(+)(in) = ADP + phosphate + 5 H(+)(out). Functionally, produces ATP from ADP in the presence of a proton gradient across the membrane. The catalytic sites are hosted primarily by the beta subunits. In Prochlorococcus marinus subsp. pastoris (strain CCMP1986 / NIES-2087 / MED4), this protein is ATP synthase subunit beta.